Reading from the N-terminus, the 278-residue chain is Large ribosomal subunit protein uL2 (278 aa).

2 disordered regions span residues 33–53 (LTEG…TSRG) and 219–278 (LTRG…KKKR). Residues 269–278 (IRSRHAKKKR) show a composition bias toward basic residues.

It belongs to the universal ribosomal protein uL2 family. Part of the 50S ribosomal subunit. Forms a bridge to the 30S subunit in the 70S ribosome.

In terms of biological role, one of the primary rRNA binding proteins. Required for association of the 30S and 50S subunits to form the 70S ribosome, for tRNA binding and peptide bond formation. It has been suggested to have peptidyltransferase activity; this is somewhat controversial. Makes several contacts with the 16S rRNA in the 70S ribosome. This chain is Large ribosomal subunit protein uL2, found in Sphingopyxis alaskensis (strain DSM 13593 / LMG 18877 / RB2256) (Sphingomonas alaskensis).